The chain runs to 165 residues: Large ribosomal subunit protein uL11A (165 aa).

Position 2 is a n,N-dimethylproline; by NTM1 (Pro-2). Lys-4 and Lys-11 each carry N6,N6,N6-trimethyllysine; by RKM2. A phosphoserine mark is found at Ser-25 and Ser-38. Arg-67 carries the post-translational modification N5-methylarginine; by RMT2. Glycyl lysine isopeptide (Lys-Gly) (interchain with G-Cter in ubiquitin) cross-links involve residues Lys-130 and Lys-146.

It belongs to the universal ribosomal protein uL11 family. As to quaternary structure, component of the large ribosomal subunit (LSU). Mature yeast ribosomes consist of a small (40S) and a large (60S) subunit. The 40S small subunit contains 1 molecule of ribosomal RNA (18S rRNA) and 33 different proteins (encoded by 57 genes). The large 60S subunit contains 3 rRNA molecules (25S, 5.8S and 5S rRNA) and 46 different proteins (encoded by 81 genes). It appears that the main modified species for L12 contains 6 methyl groups, 2 on Pro-2, 3 on Lys-4 and 1 on Arg-67. Although not reproduced with a second method, methylation at Lys-11 cannot be ruled out.

It localises to the cytoplasm. Functionally, component of the ribosome, a large ribonucleoprotein complex responsible for the synthesis of proteins in the cell. The small ribosomal subunit (SSU) binds messenger RNAs (mRNAs) and translates the encoded message by selecting cognate aminoacyl-transfer RNA (tRNA) molecules. The large subunit (LSU) contains the ribosomal catalytic site termed the peptidyl transferase center (PTC), which catalyzes the formation of peptide bonds, thereby polymerizing the amino acids delivered by tRNAs into a polypeptide chain. The nascent polypeptides leave the ribosome through a tunnel in the LSU and interact with protein factors that function in enzymatic processing, targeting, and the membrane insertion of nascent chains at the exit of the ribosomal tunnel. The polypeptide is Large ribosomal subunit protein uL11A (Saccharomyces cerevisiae (strain ATCC 204508 / S288c) (Baker's yeast)).